The following is a 340-amino-acid chain: Replication initiation protein (340 aa).

A disordered region spans residues 38-58 (PERKRTKRRRGEHSTKPKCEN).

The chain is Replication initiation protein (repA1) from Escherichia coli.